A 336-amino-acid polypeptide reads, in one-letter code: Flavonoid 4'-O-methyltransferase 3 (336 aa).

2 residues coordinate S-adenosyl-L-methionine: Y140 and D203. H241 serves as the catalytic Proton acceptor.

This sequence belongs to the class I-like SAM-binding methyltransferase superfamily. Cation-independent O-methyltransferase family. As to quaternary structure, homodimer. In terms of tissue distribution, expressed in leaves.

The catalysed reaction is scutellarein 7-methyl ether + S-adenosyl-L-methionine = ladanein + S-adenosyl-L-homocysteine + H(+). It carries out the reaction cirsimaritin + S-adenosyl-L-methionine = salvigenin + S-adenosyl-L-homocysteine + H(+). It catalyses the reaction cirsiliol + S-adenosyl-L-methionine = eupatorin + S-adenosyl-L-homocysteine + H(+). The enzyme catalyses genkwanin + S-adenosyl-L-methionine = apigenin 4',7-dimethyl ether + S-adenosyl-L-homocysteine. It functions in the pathway flavonoid metabolism. Its activity is regulated as follows. Substrate inhibition by genkwanin (GENK) at concentrations above 2.5 mM. Flavonoid 4'-O-methyltransferase involved in the biosynthesis of polymethoxylated flavonoids natural products such as nevadensin and salvigenin, aroma compounds which contribute to the flavor of sweet basil, and exhibit pharmacological activities such as anti-allergic, anti-oxidant, antibacterial, anti-proliferative, and anti-inflammatory effects. Catalyzes S-adenosylmethionine-dependent regioselective 4'-O-methylation of flavonoids; active on various hydroxylated flavonoid substrates, including scutellarein-7-methyl ether (SCU7Me) and cirsimaritin (CIRM), and, with a lower efficiency, hispidulin, ladanein (LAD), cirsioliol (CIRL) and genkwanin (GENK). The chain is Flavonoid 4'-O-methyltransferase 3 from Ocimum basilicum (Sweet basil).